The primary structure comprises 266 residues: Zinc finger protein CG30 (266 aa).

The segment at 8–63 (CNICFSVAEIKNYFMQPIDRLTMIPVLELDTCKHQLCSMCIRKIRKRKKTPCPLCR) adopts an RING-type zinc-finger fold.

It is found in the host nucleus. Its function is as follows. Plays a role in the proper expression of late and very late genes. This Bombyx mori nuclear polyhedrosis virus (BmNPV) protein is Zinc finger protein CG30 (CG30).